The following is a 159-amino-acid chain: MRCPKCQHNKSNVIDSRQAEDGNTIRRRRECDACHARFTTFERVEEVPLLVVKKDGTREQFSRDKIFNGILMSAQKRPVSSEDIENAITRIEQNIRRNHDGEVDSEVIGNLVMKELADLDEITYVRFASVYRSFKDVDEIEELLQEITKTVRAKKESKK.

Residues 1–21 (MRCPKCQHNKSNVIDSRQAED) form a disordered region. A zinc finger spans residues 3 to 34 (CPKCQHNKSNVIDSRQAEDGNTIRRRRECDAC). Positions 49-139 (LLVVKKDGTR…VYRSFKDVDE (91 aa)) constitute an ATP-cone domain.

Belongs to the NrdR family. Zn(2+) serves as cofactor.

Its function is as follows. Negatively regulates transcription of bacterial ribonucleotide reductase nrd genes and operons by binding to NrdR-boxes. The chain is Transcriptional repressor NrdR from Streptococcus thermophilus (strain CNRZ 1066).